The primary structure comprises 148 residues: uncharacterized protein (148 aa).

The region spanning 7–148 is the N-acetyltransferase domain; the sequence is LEINYKTDEL…HDVLLWKPIR (142 aa).

This is an uncharacterized protein from Staphylococcus aureus (strain Mu50 / ATCC 700699).